The primary structure comprises 704 residues: Polyribonucleotide nucleotidyltransferase (704 aa).

Residues aspartate 490 and aspartate 496 each coordinate Mg(2+). Residues 557-616 (PKIEMIQIKPAKIKDVIGKGGETINSIIDETGVKIDIDQDGNVSIASSDAEMIKKAIKII) enclose the KH domain. In terms of domain architecture, S1 motif spans 626–694 (GQVYLAKVVR…KQGRVNVSRK (69 aa)).

Belongs to the polyribonucleotide nucleotidyltransferase family. It depends on Mg(2+) as a cofactor.

Its subcellular location is the cytoplasm. It carries out the reaction RNA(n+1) + phosphate = RNA(n) + a ribonucleoside 5'-diphosphate. In terms of biological role, involved in mRNA degradation. Catalyzes the phosphorolysis of single-stranded polyribonucleotides processively in the 3'- to 5'-direction. The protein is Polyribonucleotide nucleotidyltransferase of Enterococcus faecalis (strain ATCC 700802 / V583).